Here is a 265-residue protein sequence, read N- to C-terminus: Metallo-beta-lactamase VIM-7 (265 aa).

A signal peptide spans 1 to 17 (MFQIRSFLVGISAFVMA). Residues H113, H115, D117, H178, C197, and H239 each contribute to the Zn(2+) site.

It belongs to the metallo-beta-lactamase superfamily. Class-B beta-lactamase family. Monomer. Zn(2+) serves as cofactor.

It localises to the periplasm. It catalyses the reaction a beta-lactam + H2O = a substituted beta-amino acid. Class B beta-lactamase which confers resistance to the beta-lactam antibiotics, including penicillins, cephalosporins and carbapenems. Acts via hydrolysis of the beta-lactam ring. Has penicillin-, cephalosporin- and carbapenem-hydrolyzing activities. This Pseudomonas aeruginosa protein is Metallo-beta-lactamase VIM-7.